Consider the following 431-residue polypeptide: Glutamate-1-semialdehyde 2,1-aminomutase (431 aa).

K269 carries the post-translational modification N6-(pyridoxal phosphate)lysine.

Belongs to the class-III pyridoxal-phosphate-dependent aminotransferase family. HemL subfamily. As to quaternary structure, homodimer. The cofactor is pyridoxal 5'-phosphate.

It localises to the cytoplasm. It carries out the reaction (S)-4-amino-5-oxopentanoate = 5-aminolevulinate. Its pathway is porphyrin-containing compound metabolism; protoporphyrin-IX biosynthesis; 5-aminolevulinate from L-glutamyl-tRNA(Glu): step 2/2. It functions in the pathway porphyrin-containing compound metabolism; chlorophyll biosynthesis. The protein is Glutamate-1-semialdehyde 2,1-aminomutase of Prosthecochloris aestuarii (strain DSM 271 / SK 413).